The sequence spans 202 residues: Transcription antitermination protein NusB (202 aa).

The span at 1–11 shows a compositional bias: basic and acidic residues; it reads MTEERTADNKA. Disordered regions lie at residues 1 to 21 and 169 to 202; these read MTEE…KRHG and SAAK…SDEA.

This sequence belongs to the NusB family.

Involved in transcription antitermination. Required for transcription of ribosomal RNA (rRNA) genes. Binds specifically to the boxA antiterminator sequence of the ribosomal RNA (rrn) operons. The polypeptide is Transcription antitermination protein NusB (Corynebacterium jeikeium (strain K411)).